A 142-amino-acid chain; its full sequence is Large ribosomal subunit protein uL13 (142 aa).

It belongs to the universal ribosomal protein uL13 family. In terms of assembly, part of the 50S ribosomal subunit.

Its function is as follows. This protein is one of the early assembly proteins of the 50S ribosomal subunit, although it is not seen to bind rRNA by itself. It is important during the early stages of 50S assembly. The chain is Large ribosomal subunit protein uL13 from Pectobacterium carotovorum subsp. carotovorum (strain PC1).